The primary structure comprises 249 residues: Sugar fermentation stimulation protein homolog (249 aa).

This sequence belongs to the SfsA family.

In Synechococcus sp. (strain RCC307), this protein is Sugar fermentation stimulation protein homolog.